The sequence spans 477 residues: Bifunctional protein HldE (477 aa).

A ribokinase region spans residues 1–318; sequence MKVTLPEFER…ENAVRGRADT (318 aa). N6-acetyllysine is present on K179. Residue 195–198 coordinates ATP; that stretch reads NLSE. D264 is an active-site residue. The interval 344–477 is cytidylyltransferase; the sequence is MTNGVFDILH…IKKIQQDKKG (134 aa).

This sequence in the N-terminal section; belongs to the carbohydrate kinase PfkB family. In the C-terminal section; belongs to the cytidylyltransferase family. Homodimer.

The enzyme catalyses D-glycero-beta-D-manno-heptose 7-phosphate + ATP = D-glycero-beta-D-manno-heptose 1,7-bisphosphate + ADP + H(+). It catalyses the reaction D-glycero-beta-D-manno-heptose 1-phosphate + ATP + H(+) = ADP-D-glycero-beta-D-manno-heptose + diphosphate. The protein operates within nucleotide-sugar biosynthesis; ADP-L-glycero-beta-D-manno-heptose biosynthesis; ADP-L-glycero-beta-D-manno-heptose from D-glycero-beta-D-manno-heptose 7-phosphate: step 1/4. It functions in the pathway nucleotide-sugar biosynthesis; ADP-L-glycero-beta-D-manno-heptose biosynthesis; ADP-L-glycero-beta-D-manno-heptose from D-glycero-beta-D-manno-heptose 7-phosphate: step 3/4. In terms of biological role, catalyzes the phosphorylation of D-glycero-D-manno-heptose 7-phosphate at the C-1 position to selectively form D-glycero-beta-D-manno-heptose-1,7-bisphosphate. Its function is as follows. Catalyzes the ADP transfer from ATP to D-glycero-beta-D-manno-heptose 1-phosphate, yielding ADP-D-glycero-beta-D-manno-heptose. The sequence is that of Bifunctional protein HldE from Shigella flexneri serotype 5b (strain 8401).